The following is a 238-amino-acid chain: Fibroblast growth factor-binding protein 1 (238 aa).

The first 20 residues, methionine 1 to serine 20, serve as a signal peptide directing secretion. The tract at residues lysine 25 to glycine 61 is disordered. 3 disulfide bridges follow: cysteine 71–cysteine 88, cysteine 97–cysteine 130, and cysteine 106–cysteine 142. O-linked (GalNAc...) serine glycosylation occurs at serine 164. The segment at lysine 197–cysteine 238 is sufficient for interaction with FGF2 and FGF2-induced effects. 2 disulfide bridges follow: cysteine 201–cysteine 238 and cysteine 218–cysteine 226.

It belongs to the fibroblast growth factor-binding protein family. Found in a complex with FGFBP1, FGF1 and FGF2. Interacts with FGF1, FGF2, FGF7, FGF10, FGF22 and HSPG2. As to expression, expressed in gut, eye, thymus, skin, lung, tongue, Purkinje cells and cerebral chorioid plexus (at protein level).

It localises to the secreted. Its subcellular location is the extracellular space. It is found in the cell membrane. In terms of biological role, acts as a carrier protein that release fibroblast-binding factors (FGFs) from the extracellular matrix (EM) storage and thus enhance the mitogenic activity of FGFs. Enhances FGF2 signaling during tissue repair, angiogenesis and in tumor growth. This Rattus norvegicus (Rat) protein is Fibroblast growth factor-binding protein 1 (Fgfbp1).